A 683-amino-acid polypeptide reads, in one-letter code: Glucosylceramidase (683 aa).

E254 acts as the Proton donor in catalysis. The active-site Nucleophile is the E483.

The protein belongs to the glycosyl hydrolase 5 (cellulase A) family.

The protein resides in the membrane. It carries out the reaction a beta-D-glucosyl-(1&lt;-&gt;1')-N-acylsphing-4-enine + H2O = an N-acylsphing-4-enine + D-glucose. With respect to regulation, inhibited by metal cations Co(2+), Cu(2+), Ni(2+), Pb(2+) and Zn(2+). Not inhibited by metal chelator ethylenediaminetetraacetic acid (EDTA). In terms of biological role, specifically hydrolyzes the glucosidic linkage in glucosylceramide. May prevent accumulation of aberrent glucosylceramide containing immature ceramide. The protein is Glucosylceramidase of Rhizopus delemar (strain RA 99-880 / ATCC MYA-4621 / FGSC 9543 / NRRL 43880) (Mucormycosis agent).